Here is an 85-residue protein sequence, read N- to C-terminus: Small ribosomal subunit protein bS20 (85 aa).

The protein belongs to the bacterial ribosomal protein bS20 family.

Its function is as follows. Binds directly to 16S ribosomal RNA. The chain is Small ribosomal subunit protein bS20 from Cytophaga hutchinsonii (strain ATCC 33406 / DSM 1761 / CIP 103989 / NBRC 15051 / NCIMB 9469 / D465).